We begin with the raw amino-acid sequence, 294 residues long: Homoserine kinase (294 aa).

83-93 (RPKSGLGSSGA) contributes to the ATP binding site.

The protein belongs to the GHMP kinase family. Homoserine kinase subfamily.

Its subcellular location is the cytoplasm. The enzyme catalyses L-homoserine + ATP = O-phospho-L-homoserine + ADP + H(+). It functions in the pathway amino-acid biosynthesis; L-threonine biosynthesis; L-threonine from L-aspartate: step 4/5. Its function is as follows. Catalyzes the ATP-dependent phosphorylation of L-homoserine to L-homoserine phosphate. The chain is Homoserine kinase from Pyrococcus abyssi (strain GE5 / Orsay).